The sequence spans 486 residues: MGYKYRDLHDFIKDLEKEGELVRIKEPLSPILEITEVTDRVCKMPGGGKALLFENPKGYRIPVLTNLYGSEKRIKKALGYENLEDIGWKLYRILKPEVPKTFLEKIKKLPELKKLNDAIPKVVKRGKVQEEVIMGDINLEDLPILKCWPKDGGRYITFGQVITKDPESGIRNVGLYRLQVLDKDKLAVHWQIHKDGNHHYWKAKRLGKKLEVAIAIGGEPPLPYVASAPLPPEVDEYLFAGIIMERPVELVKGLTVDLEYPANAEIAIEGYVDPEEPLVDEGPFGDHTGFYTPVDKYPQMHVTAIVMRKDPIYLTTIVGRPPQEDKYLGWATERIFLPLIKFNLPEVVDYHLPAEGCFHNFCFVSIKKRYPGHAFKVAYALLGLGLMSLEKHIVVFDDWINVQDIGEVLWAWGNNVDPQRDVLILKGPIDVLDHATNEVGFGGKMIIDATTKWKEEGYTREWPEVIEMSPEVKKRIDEIWDRLGIE.

It belongs to the UbiD family.

This is an uncharacterized protein from Aquifex aeolicus (strain VF5).